Here is a 510-residue protein sequence, read N- to C-terminus: Probable lysine--tRNA ligase, cytoplasmic (510 aa).

This sequence belongs to the class-II aminoacyl-tRNA synthetase family. Homodimer.

Its subcellular location is the cytoplasm. The enzyme catalyses tRNA(Lys) + L-lysine + ATP = L-lysyl-tRNA(Lys) + AMP + diphosphate. The sequence is that of Probable lysine--tRNA ligase, cytoplasmic from Encephalitozoon cuniculi (strain GB-M1) (Microsporidian parasite).